Consider the following 128-residue polypeptide: B2 protein (128 aa).

Positions 1–10 (SLILLVAVQA) are cleaved as a signal peptide. Cystine bridges form between Cys26–Cys57 and Cys97–Cys114.

The protein belongs to the PBP/GOBP family. In terms of processing, N-glycosylated. Tubular accessory sex gland.

The protein resides in the secreted. Its function is as follows. May be a carrier protein for lipids. This Tenebrio molitor (Yellow mealworm beetle) protein is B2 protein.